Consider the following 491-residue polypeptide: Nicotinamide phosphoribosyltransferase (491 aa).

At methionine 1 the chain carries N-acetylmethionine. Tyrosine 188 carries the phosphotyrosine modification. Arginine 196 provides a ligand contact to diphosphate. Aspartate 219 is a binding site for beta-nicotinamide D-ribonucleotide. Positions 247 and 311 each coordinate diphosphate. Beta-nicotinamide D-ribonucleotide is bound by residues 311–313 (RPD), 353–354 (GD), glycine 384, and arginine 392. Serine 472 is subject to Phosphoserine.

This sequence belongs to the NAPRTase family. In terms of assembly, homodimer. As to expression, expressed in various tissues. At the highest level in liver and at the second highest in heart. The amount is higher in heart than in lung.

It is found in the nucleus. Its subcellular location is the cytoplasm. The protein resides in the secreted. It carries out the reaction beta-nicotinamide D-ribonucleotide + diphosphate = 5-phospho-alpha-D-ribose 1-diphosphate + nicotinamide + H(+). It functions in the pathway cofactor biosynthesis; NAD(+) biosynthesis; nicotinamide D-ribonucleotide from 5-phospho-alpha-D-ribose 1-diphosphate and nicotinamide: step 1/1. Catalyzes the condensation of nicotinamide with 5-phosphoribosyl-1-pyrophosphate to yield nicotinamide mononucleotide, an intermediate in the biosynthesis of NAD. It is the rate limiting component in the mammalian NAD biosynthesis pathway. The secreted form behaves both as a cytokine with immunomodulating properties and an adipokine with anti-diabetic properties, it has no enzymatic activity, partly because of lack of activation by ATP, which has a low level in extracellular space and plasma. Plays a role in the modulation of circadian clock function. NAMPT-dependent oscillatory production of NAD regulates oscillation of clock target gene expression by releasing the core clock component: CLOCK-BMAL1 heterodimer from NAD-dependent SIRT1-mediated suppression. The polypeptide is Nicotinamide phosphoribosyltransferase (Nampt) (Rattus norvegicus (Rat)).